We begin with the raw amino-acid sequence, 379 residues long: Putative F-box protein At5g62660 (379 aa).

The region spanning Ala-35–Val-84 is the F-box domain.

This Arabidopsis thaliana (Mouse-ear cress) protein is Putative F-box protein At5g62660.